Consider the following 147-residue polypeptide: Putative pre-16S rRNA nuclease (147 aa).

The protein belongs to the YqgF nuclease family.

Its subcellular location is the cytoplasm. In terms of biological role, could be a nuclease involved in processing of the 5'-end of pre-16S rRNA. The chain is Putative pre-16S rRNA nuclease from Acinetobacter baylyi (strain ATCC 33305 / BD413 / ADP1).